Here is a 218-residue protein sequence, read N- to C-terminus: Octanoyltransferase (218 aa).

The region spanning 31–206 is the BPL/LPL catalytic domain; it reads REAADEVWLV…QLVKHLDYAE (176 aa). Substrate-binding positions include 70–77, 137–139, and 150–152; these read RGGQVTYH, SLG, and GLA. Residue Cys168 is the Acyl-thioester intermediate of the active site.

The protein belongs to the LipB family.

The protein localises to the cytoplasm. It carries out the reaction octanoyl-[ACP] + L-lysyl-[protein] = N(6)-octanoyl-L-lysyl-[protein] + holo-[ACP] + H(+). The protein operates within protein modification; protein lipoylation via endogenous pathway; protein N(6)-(lipoyl)lysine from octanoyl-[acyl-carrier-protein]: step 1/2. Functionally, catalyzes the transfer of endogenously produced octanoic acid from octanoyl-acyl-carrier-protein onto the lipoyl domains of lipoate-dependent enzymes. Lipoyl-ACP can also act as a substrate although octanoyl-ACP is likely to be the physiological substrate. The sequence is that of Octanoyltransferase from Pseudomonas syringae pv. syringae (strain B728a).